Here is a 1358-residue protein sequence, read N- to C-terminus: Retrotransposon-like protein 1 (1358 aa).

Disordered stretches follow at residues 1–159 (MIEP…TEHS) and 563–616 (ADVF…TAPW). Residues 19–30 (SSKQMESSEGSS) show a composition bias toward low complexity. The span at 65-79 (EMEELPTDLLQDMEE) shows a compositional bias: acidic residues. Basic and acidic residues predominate over residues 131-149 (AREEQEAHTDLKESGREET). A compositionally biased stretch (acidic residues) spans 583–592 (GSDDLSESEP). A run of 2 helical transmembrane segments spans residues 1083–1099 (LLYWKNTLALAAILVLL) and 1126–1146 (LILDSSLIAGSSITTAITQLL). 2 disordered regions span residues 1250–1283 (DGLQDTSQDKQDNDVQEAPPSHTAATHPPRPRHL) and 1338–1358 (QPREQARLEELPDEDEDANLD). Positions 1267-1276 (APPSHTAATH) are enriched in low complexity. Basic and acidic residues predominate over residues 1338–1347 (QPREQARLEE). The span at 1348 to 1358 (LPDEDEDANLD) shows a compositional bias: acidic residues.

The protein localises to the membrane. Plays an essential role in capillaries endothelial cells for the maintenance of feto-maternal interface and for development of the placenta. The polypeptide is Retrotransposon-like protein 1 (RTL1) (Homo sapiens (Human)).